Here is a 175-residue protein sequence, read N- to C-terminus: Inorganic pyrophosphatase (175 aa).

3 residues coordinate substrate: K30, R44, and Y56. 3 residues coordinate Mg(2+): D66, D71, and D103. Substrate is bound at residue Y142.

This sequence belongs to the PPase family. Homohexamer. The cofactor is Mg(2+).

Its subcellular location is the cytoplasm. The enzyme catalyses diphosphate + H2O = 2 phosphate + H(+). Its function is as follows. Catalyzes the hydrolysis of inorganic pyrophosphate (PPi) forming two phosphate ions. The protein is Inorganic pyrophosphatase of Buchnera aphidicola subsp. Baizongia pistaciae (strain Bp).